Here is a 336-residue protein sequence, read N- to C-terminus: MLQSLAGSSCVRLVERHRSAWCFGFLVLGYLLYLVFGAVVFSSVELPYEDLLRQELRKLKRRFLEEHECLSEPQLEQFLGRVLEASNYGVSVLSNASGNWNWDFTSALFFASTVLSTTGYGHTVPLSDGGKAFCIIYSVIGIPFTLLFLTAVVQRVTVHVTRRPVLYFHIRWGFSKQVVAIVHAVLLGFVTVSCFFFIPAAVFSVLEDDWNFLESFYFCFISLSTIGLGDYVPGEGYNQKFRELYKIGITCYLLLGLIAMLVVLETFCELHELKKFRKMFYVKKDKDEDQVHIMEHDQLSFSSITEQAAGLKEEQKQNEPFVASQSPPYEDGSANH.

Over 1–20 (MLQSLAGSSCVRLVERHRSA) the chain is Cytoplasmic. Residues 21–41 (WCFGFLVLGYLLYLVFGAVVF) traverse the membrane as a helical segment. Topologically, residues 42–103 (SSVELPYEDL…SNASGNWNWD (62 aa)) are extracellular. N-linked (GlcNAc...) asparagine glycosylation occurs at N95. An intramembrane region (helical) is located at residues 104–116 (FTSALFFASTVLS). Residues 117–122 (TTGYGH) lie within the membrane without spanning it. The interval 117–122 (TTGYGH) is selectivity filter 1. The Extracellular portion of the chain corresponds to 123–132 (TVPLSDGGKA). A helical membrane pass occupies residues 133–156 (FCIIYSVIGIPFTLLFLTAVVQRV). Over 157-181 (TVHVTRRPVLYFHIRWGFSKQVVAI) the chain is Cytoplasmic. Residues 182 to 202 (VHAVLLGFVTVSCFFFIPAAV) form a helical membrane-spanning segment. Topologically, residues 203 to 211 (FSVLEDDWN) are extracellular. Positions 212–224 (FLESFYFCFISLS) form an intramembrane region, helical. Residues 225 to 230 (TIGLGD) form a selectivity filter 2 region. The stretch at 225 to 231 (TIGLGDY) is an intramembrane region. Topologically, residues 232–243 (VPGEGYNQKFRE) are extracellular. The chain crosses the membrane as a helical span at residues 244-267 (LYKIGITCYLLLGLIAMLVVLETF). Residues 268-336 (CELHELKKFR…PPYEDGSANH (69 aa)) lie on the Cytoplasmic side of the membrane. K274 participates in a covalent cross-link: Glycyl lysine isopeptide (Lys-Gly) (interchain with G-Cter in SUMO). Positions 293–299 (IMEHDQL) are important for intracellular retention in recycling endosomes. The segment at 310-336 (GLKEEQKQNEPFVASQSPPYEDGSANH) is disordered. At S326 the chain carries Phosphoserine.

It belongs to the two pore domain potassium channel (TC 1.A.1.8) family. As to quaternary structure, homodimer; disulfide-linked. Heterodimer with KCNK2; disulfide-linked. In astrocytes, forms mostly heterodimeric potassium channels with KCNK2, with only a minor proportion of functional channels containing homodimeric KCNK1. Interacts with KCNK3 and KCNK9, forming functional heterodimeric channels. Interacts with GNG4. Identified in a complex with PSD and ARF6; interacts only with PSD that is bound to ARF6. Interacts with UBE2I. In terms of processing, sumoylation is controversial. Sumoylated by UBE2I. Not sumoylated when expressed in xenopus oocytes or mammalian cells. Sumoylation inactivates the channel, but does not interfere with expression at the cell membrane. Sumoylation of a single subunit is sufficient to silence the dimeric channel. Sumoylation of KCNK1 is sufficient to silence heterodimeric channels formed by KCNK1 and KCNK3 or KCNK9. Desumoylated by SENP1; this activates the channel. Desumoylated by SENP1; this strongly increases halothane-mediated activation of heterodimeric channels formed with KCNK9. SENP1 treatment has no effect. Detected in brain and in kidney cortex and medulla, especially at the renal brush border membranes of the proximal convoluted tubules, in distal tubules and on intercalated cells of the collecting duct. Detected in cerebellum granule neurons. Detected in astrocytes in hippocampus stratum radiatum. Highly expressed in the stria vascularis in the cochlea. Detected in neurons in Scarpa's ganglion in the inner ear, at nerve terminals in the crista ampullaris, in supporting cells and dark cells, but not in hair cells (at protein level). Detected in the brain cerebellar granule cell layer, amygdala, thalamus reticular nucleus, habenula, mesencephalic trigeminal neurons, neocortex and piriform cortex, and at lower levels in the olfactory bulb. Detected in Scarpa's ganglia and crista ampullaris in the inner ear.

It localises to the cell membrane. Its subcellular location is the recycling endosome. The protein resides in the apical cell membrane. It is found in the cytoplasmic vesicle. The protein localises to the perikaryon. It localises to the cell projection. Its subcellular location is the dendrite. The protein resides in the synaptic cell membrane. The enzyme catalyses K(+)(in) = K(+)(out). It carries out the reaction NH4(+)(in) = NH4(+)(out). The catalysed reaction is Na(+)(in) = Na(+)(out). It catalyses the reaction Rb(+)(in) = Rb(+)(out). The enzyme catalyses Cs(+)(in) = Cs(+)(out). It carries out the reaction Li(+)(in) = Li(+)(out). The catalysed reaction is L-glutamate(out) = L-glutamate(in). It catalyses the reaction chloride(in) = chloride(out). Inhibited by 100 uM quinine. Slightly inhibited by Ba(+). Activity is first increased and then decreased when the extracellular pH is lowered to 6.0. Ion channel that contributes to passive transmembrane potassium transport and to the regulation of the resting membrane potential in brain astrocytes, but also in kidney and in other tissues. Forms dimeric channels through which potassium ions pass in accordance with their electrochemical gradient. The channel is selective for K(+) ions at physiological potassium concentrations and at neutral pH, but becomes permeable to Na(+) at subphysiological K(+) levels and upon acidification of the extracellular medium. The homodimer has very low potassium channel activity, when expressed in heterologous systems, and can function as weakly inward rectifying potassium channel. Channel activity is modulated by activation of serotonin receptors. Heterodimeric channels containing KCNK1 and KCNK2 have much higher activity, and may represent the predominant form in astrocytes. Heterodimeric channels containing KCNK1 and KCNK3 or KCNK9 have much higher activity. Heterodimeric channels formed by KCNK1 and KCNK9 may contribute to halothane-sensitive currents. Mediates outward rectifying potassium currents in dentate gyrus granule cells and contributes to the regulation of their resting membrane potential. Contributes to the regulation of action potential firing in dentate gyrus granule cells and down-regulates their intrinsic excitability. Contributes to the regulation of the resting membrane potential of pancreatic beta cells. In astrocytes, the heterodimer formed by KCNK1 and KCNK2 is required for rapid glutamate release in response to activation of G-protein coupled receptors, such as F2R and CNR1. Required for normal ion and water transport in the kidney. The low channel activity of homodimeric KCNK1 may be due to sumoylation. The low channel activity may be due to rapid internalization from the cell membrane and retention in recycling endosomes. Permeable to monovalent cations with ion selectivity for K(+) &gt; Rb(+) &gt;&gt; NH4(+) &gt;&gt; Cs(+) = Na(+) = Li(+). This chain is Potassium channel subfamily K member 1, found in Rattus norvegicus (Rat).